A 202-amino-acid chain; its full sequence is uncharacterized protein (202 aa).

2 disordered regions span residues 1–32 and 46–95; these read MRPEGVSRGRASSVSISMCPPPPNGARRASLG and PSSV…PSYT. Positions 47-79 are enriched in low complexity; sequence SSVSLSSSSSRRSMPSLGSSRSSSLPSTGSLRS.

This is an uncharacterized protein from Equus caballus (Horse).